A 132-amino-acid polypeptide reads, in one-letter code: Transcription antitermination protein NusB (132 aa).

The protein belongs to the NusB family.

Involved in transcription antitermination. Required for transcription of ribosomal RNA (rRNA) genes. Binds specifically to the boxA antiterminator sequence of the ribosomal RNA (rrn) operons. This chain is Transcription antitermination protein NusB, found in Campylobacter jejuni subsp. doylei (strain ATCC BAA-1458 / RM4099 / 269.97).